Here is a 272-residue protein sequence, read N- to C-terminus: MSDIHSLLVAAILGVVEGLTEFLPVSSTGHMIIVGHLLGFEGDTAETFEVVIQLGSILAVVVMFWRRLFGLIGIHFGKQPHEGTGKGRLTLGHIVLGMIPAVVLGLVFHDTIKSLFNPVNVMYALVVGGLLLIAAECLKPKEPRAPGLDDMTYRQAFMIGCFQCLALWPGFSRSGATISGGMLMGVSRYAASEFSFLLAVPMMMGATALDLYKSWSFLTVEDIPMFAVGFVTAFIVALIAIKTFLQLIKRISFIPFAIYRFIVAAAVYVVFF.

8 helical membrane passes run 4 to 24 (IHSL…EFLP), 45 to 65 (AETF…VMFW), 89 to 109 (LTLG…LVFH), 115 to 135 (LFNP…LIAA), 152 to 174 (TYRQ…FSRS), 189 to 209 (YAAS…ATAL), 225 to 245 (MFAV…KTFL), and 251 to 271 (ISFI…YVVF).

It belongs to the UppP family.

Its subcellular location is the cell inner membrane. It catalyses the reaction di-trans,octa-cis-undecaprenyl diphosphate + H2O = di-trans,octa-cis-undecaprenyl phosphate + phosphate + H(+). Functionally, catalyzes the dephosphorylation of undecaprenyl diphosphate (UPP). Confers resistance to bacitracin. The sequence is that of Undecaprenyl-diphosphatase from Citrobacter koseri (strain ATCC BAA-895 / CDC 4225-83 / SGSC4696).